The chain runs to 297 residues: Bifunctional protein FolD 1 (297 aa).

NADP(+) contacts are provided by residues 164-166 (GRS), Ser193, and Ile234.

Belongs to the tetrahydrofolate dehydrogenase/cyclohydrolase family. Homodimer.

It carries out the reaction (6R)-5,10-methylene-5,6,7,8-tetrahydrofolate + NADP(+) = (6R)-5,10-methenyltetrahydrofolate + NADPH. The catalysed reaction is (6R)-5,10-methenyltetrahydrofolate + H2O = (6R)-10-formyltetrahydrofolate + H(+). It participates in one-carbon metabolism; tetrahydrofolate interconversion. Catalyzes the oxidation of 5,10-methylenetetrahydrofolate to 5,10-methenyltetrahydrofolate and then the hydrolysis of 5,10-methenyltetrahydrofolate to 10-formyltetrahydrofolate. This is Bifunctional protein FolD 1 from Haloarcula marismortui (strain ATCC 43049 / DSM 3752 / JCM 8966 / VKM B-1809) (Halobacterium marismortui).